Reading from the N-terminus, the 95-residue chain is Co-chaperonin GroES (95 aa).

Belongs to the GroES chaperonin family. As to quaternary structure, heptamer of 7 subunits arranged in a ring. Interacts with the chaperonin GroEL.

It is found in the cytoplasm. In terms of biological role, together with the chaperonin GroEL, plays an essential role in assisting protein folding. The GroEL-GroES system forms a nano-cage that allows encapsulation of the non-native substrate proteins and provides a physical environment optimized to promote and accelerate protein folding. GroES binds to the apical surface of the GroEL ring, thereby capping the opening of the GroEL channel. This chain is Co-chaperonin GroES, found in Maricaulis maris (strain MCS10) (Caulobacter maris).